A 555-amino-acid chain; its full sequence is Formate--tetrahydrofolate ligase (555 aa).

65-72 (TPAGEGKS) provides a ligand contact to ATP.

It belongs to the formate--tetrahydrofolate ligase family.

The catalysed reaction is (6S)-5,6,7,8-tetrahydrofolate + formate + ATP = (6R)-10-formyltetrahydrofolate + ADP + phosphate. The protein operates within one-carbon metabolism; tetrahydrofolate interconversion. This Staphylococcus carnosus (strain TM300) protein is Formate--tetrahydrofolate ligase.